An 85-amino-acid polypeptide reads, in one-letter code: Homeobox protein liguleless 3 (85 aa).

The region spanning 1–21 (ELKEMLLKKYSGCLSRLRSEF) is the ELK domain. A DNA-binding region (homeobox; TALE-type) is located at residues 22–85 (LKKRKKGKLP…NQRKRHWKPS (64 aa)).

The protein belongs to the TALE/KNOX homeobox family.

The protein resides in the nucleus. In terms of biological role, probably binds to the DNA sequence 5'-TGAC-3'. This chain is Homeobox protein liguleless 3 (LG3), found in Zea mays (Maize).